The following is a 154-amino-acid chain: Ribosome maturation factor RimP (154 aa).

It belongs to the RimP family.

Its subcellular location is the cytoplasm. Required for maturation of 30S ribosomal subunits. In Prochlorococcus marinus (strain MIT 9313), this protein is Ribosome maturation factor RimP.